Reading from the N-terminus, the 702-residue chain is DNA ligase (702 aa).

NAD(+) is bound by residues aspartate 32 to aspartate 36 and serine 81 to leucine 82. Positions alanine 104–arginine 125 are disordered. NAD(+) is bound at residue glutamate 139. Lysine 141 serves as the catalytic N6-AMP-lysine intermediate. Positions 162, 199, 316, and 340 each coordinate NAD(+). Zn(2+)-binding residues include cysteine 434, cysteine 437, cysteine 452, and cysteine 458. Positions lysine 616 to valine 702 constitute a BRCT domain.

Belongs to the NAD-dependent DNA ligase family. LigA subfamily. It depends on Mg(2+) as a cofactor. The cofactor is Mn(2+).

The catalysed reaction is NAD(+) + (deoxyribonucleotide)n-3'-hydroxyl + 5'-phospho-(deoxyribonucleotide)m = (deoxyribonucleotide)n+m + AMP + beta-nicotinamide D-nucleotide.. In terms of biological role, DNA ligase that catalyzes the formation of phosphodiester linkages between 5'-phosphoryl and 3'-hydroxyl groups in double-stranded DNA using NAD as a coenzyme and as the energy source for the reaction. It is essential for DNA replication and repair of damaged DNA. In Hamiltonella defensa subsp. Acyrthosiphon pisum (strain 5AT), this protein is DNA ligase.